A 134-amino-acid polypeptide reads, in one-letter code: Profilin-3 (134 aa).

The cysteines at positions 13 and 118 are disulfide-linked. The Involved in PIP2 interaction motif lies at 84–100; sequence AVIRGKKGSGGITIKKT. T114 is subject to Phosphothreonine.

This sequence belongs to the profilin family. As to quaternary structure, occurs in many kinds of cells as a complex with monomeric actin in a 1:1 ratio. In terms of processing, phosphorylated by MAP kinases.

It localises to the cytoplasm. It is found in the cytoskeleton. Binds to actin and affects the structure of the cytoskeleton. At high concentrations, profilin prevents the polymerization of actin, whereas it enhances it at low concentrations. The polypeptide is Profilin-3 (Olea europaea (Common olive)).